Consider the following 396-residue polypeptide: Elongation factor Tu (396 aa).

Residues K10–T206 form the tr-type G domain. The segment at G19 to T26 is G1. G19 to T26 serves as a coordination point for GTP. Residue T26 coordinates Mg(2+). Residues G60 to S64 are G2. Positions D81–G84 are G3. GTP is bound by residues D81–H85 and N136–D139. The tract at residues N136–D139 is G4. Residues S174–L176 are G5.

The protein belongs to the TRAFAC class translation factor GTPase superfamily. Classic translation factor GTPase family. EF-Tu/EF-1A subfamily. Monomer.

The protein localises to the cytoplasm. The enzyme catalyses GTP + H2O = GDP + phosphate + H(+). GTP hydrolase that promotes the GTP-dependent binding of aminoacyl-tRNA to the A-site of ribosomes during protein biosynthesis. The protein is Elongation factor Tu of Pelagibacter ubique (strain HTCC1062).